The chain runs to 323 residues: tRNA N6-adenosine threonylcarbamoyltransferase (323 aa).

3 residues coordinate Fe cation: His-106, His-110, and Tyr-127. Substrate is bound by residues 127–131 (YVSGA), Asp-159, Gly-172, Glu-176, and Asn-255. A Fe cation-binding site is contributed by Asp-283.

It belongs to the KAE1 / TsaD family. In terms of assembly, monomer. Component of the KEOPS complex that consists of Kae1, Bud32, Cgi121 and Pcc1; the whole complex dimerizes. The cofactor is Fe(2+).

It is found in the cytoplasm. It carries out the reaction L-threonylcarbamoyladenylate + adenosine(37) in tRNA = N(6)-L-threonylcarbamoyladenosine(37) in tRNA + AMP + H(+). Required for the formation of a threonylcarbamoyl group on adenosine at position 37 (t(6)A37) in tRNAs that read codons beginning with adenine. Is a component of the KEOPS complex that is probably involved in the transfer of the threonylcarbamoyl moiety of threonylcarbamoyl-AMP (TC-AMP) to the N6 group of A37. Kae1 likely plays a direct catalytic role in this reaction, but requires other protein(s) of the complex to fulfill this activity. This Methanocella arvoryzae (strain DSM 22066 / NBRC 105507 / MRE50) protein is tRNA N6-adenosine threonylcarbamoyltransferase.